The following is a 445-amino-acid chain: tRNA(Ile)-lysidine synthase (445 aa).

19–24 (SGGIDS) provides a ligand contact to ATP.

This sequence belongs to the tRNA(Ile)-lysidine synthase family.

The protein resides in the cytoplasm. It carries out the reaction cytidine(34) in tRNA(Ile2) + L-lysine + ATP = lysidine(34) in tRNA(Ile2) + AMP + diphosphate + H(+). Functionally, ligates lysine onto the cytidine present at position 34 of the AUA codon-specific tRNA(Ile) that contains the anticodon CAU, in an ATP-dependent manner. Cytidine is converted to lysidine, thus changing the amino acid specificity of the tRNA from methionine to isoleucine. This Buchnera aphidicola subsp. Schizaphis graminum (strain Sg) protein is tRNA(Ile)-lysidine synthase.